A 284-amino-acid chain; its full sequence is Glutamate 5-kinase 2 (284 aa).

Lysine 26 is an ATP binding site. Positions 67, 154, and 166 each coordinate substrate. Residues 186–187 (SD) and 228–234 (SGGMVTK) each bind ATP.

The protein belongs to the glutamate 5-kinase family.

Its subcellular location is the cytoplasm. It carries out the reaction L-glutamate + ATP = L-glutamyl 5-phosphate + ADP. It participates in amino-acid biosynthesis; L-proline biosynthesis; L-glutamate 5-semialdehyde from L-glutamate: step 1/2. Functionally, catalyzes the transfer of a phosphate group to glutamate to form L-glutamate 5-phosphate. This chain is Glutamate 5-kinase 2, found in Mesorhizobium japonicum (strain LMG 29417 / CECT 9101 / MAFF 303099) (Mesorhizobium loti (strain MAFF 303099)).